The chain runs to 314 residues: DNA-directed RNA polymerase subunit alpha (314 aa).

The segment at 1-228 is alpha N-terminal domain (alpha-NTD); it reads MIEIEKPKIE…EHLNIFVGLT (228 aa). Positions 246 to 314 are alpha C-terminal domain (alpha-CTD); sequence EKVLEMTIEE…ELGLGLRKDD (69 aa).

The protein belongs to the RNA polymerase alpha chain family. Homodimer. The RNAP catalytic core consists of 2 alpha, 1 beta, 1 beta' and 1 omega subunit. When a sigma factor is associated with the core the holoenzyme is formed, which can initiate transcription.

It carries out the reaction RNA(n) + a ribonucleoside 5'-triphosphate = RNA(n+1) + diphosphate. Its function is as follows. DNA-dependent RNA polymerase catalyzes the transcription of DNA into RNA using the four ribonucleoside triphosphates as substrates. This is DNA-directed RNA polymerase subunit alpha from Bacillus cytotoxicus (strain DSM 22905 / CIP 110041 / 391-98 / NVH 391-98).